The primary structure comprises 177 residues: NADH-quinone oxidoreductase subunit B (177 aa).

Positions 56, 57, 121, and 151 each coordinate [4Fe-4S] cluster.

The protein belongs to the complex I 20 kDa subunit family. In terms of assembly, NDH-1 is composed of 14 different subunits. Subunits NuoB, C, D, E, F, and G constitute the peripheral sector of the complex. [4Fe-4S] cluster is required as a cofactor.

It localises to the cell inner membrane. It catalyses the reaction a quinone + NADH + 5 H(+)(in) = a quinol + NAD(+) + 4 H(+)(out). Its function is as follows. NDH-1 shuttles electrons from NADH, via FMN and iron-sulfur (Fe-S) centers, to quinones in the respiratory chain. The immediate electron acceptor for the enzyme in this species is believed to be ubiquinone. Couples the redox reaction to proton translocation (for every two electrons transferred, four hydrogen ions are translocated across the cytoplasmic membrane), and thus conserves the redox energy in a proton gradient. This chain is NADH-quinone oxidoreductase subunit B, found in Rhodobacter capsulatus (Rhodopseudomonas capsulata).